We begin with the raw amino-acid sequence, 169 residues long: Calcium-binding protein G (169 aa).

EF-hand domains lie at 9-44 (KIFQ…KMNG), 60-83 (VDMD…QAKK), 92-127 (AALA…QGYN), and 133-162 (DYVL…KRLA). Ca(2+)-binding residues include aspartate 105, aspartate 107, aspartate 109, lysine 111, glutamate 116, aspartate 140, aspartate 142, aspartate 144, tyrosine 146, and glutamate 151.

This chain is Calcium-binding protein G (cbpG), found in Dictyostelium discoideum (Social amoeba).